Here is a 219-residue protein sequence, read N- to C-terminus: Large ribosomal subunit protein bL25 (219 aa).

The interval 176 to 219 (VTVVPPTDEPSEEEVEAMEGESATEEPEVVGEDKEDDEEENKED) is disordered. A compositionally biased stretch (acidic residues) spans 184 to 219 (EPSEEEVEAMEGESATEEPEVVGEDKEDDEEENKED).

Belongs to the bacterial ribosomal protein bL25 family. CTC subfamily. As to quaternary structure, part of the 50S ribosomal subunit; part of the 5S rRNA/L5/L18/L25 subcomplex. Contacts the 5S rRNA. Binds to the 5S rRNA independently of L5 and L18.

In terms of biological role, this is one of the proteins that binds to the 5S RNA in the ribosome where it forms part of the central protuberance. This is Large ribosomal subunit protein bL25 from Staphylococcus epidermidis (strain ATCC 35984 / DSM 28319 / BCRC 17069 / CCUG 31568 / BM 3577 / RP62A).